Consider the following 707-residue polypeptide: Tubulin polyglutamylase ttll-11 (707 aa).

The TTL domain occupies 124 to 488 (RFTIDTSRAK…PLVRDTLLLV (365 aa)). ATP contacts are provided by residues 279 to 282 (QEYV), Lys-293, and Asp-295. Positions 675 to 707 (RNRSGTNGRKQNFTDDNNNPNSFAHLPKINERL) are disordered. Residues 677-696 (RSGTNGRKQNFTDDNNNPNS) show a composition bias toward polar residues.

This sequence belongs to the tubulin--tyrosine ligase family. Expressed in amphid sensory neurons. Weakly expressed in body wall muscles. Isoform a: Specifically expressed in ciliated sensory neurons in the head, including the IL1s, OLQ, head CEP, and amphid neurons. In the male tail, expressed in HOA, RnA, and phasmid neurons. Isoform b: Specifically expressed in male and hermaphrodite IL2 ciliated sensory neurons, and in male-specific CEM, HOB and RnB ciliated sensory neurons.

It localises to the cell projection. Its subcellular location is the axon. The protein localises to the perikaryon. It is found in the dendrite. The protein resides in the cilium. It localises to the extracellular vesicle. It carries out the reaction L-glutamyl-[protein] + L-glutamate + ATP = gamma-L-glutamyl-L-glutamyl-[protein] + ADP + phosphate + H(+). Polyglutamylase which preferentially modifies tubulin. Involved in the side-chain initiation step of the polyglutamylation reaction. By controlling tubulin glutamylation, regulates ciliary specialization and motor-based transport. Promotes the formation of A and B tubule singlets by splaying microtubule doublets in cilia. Together with ttll-4 and 5, required for male mating. Functionally, specifically promotes tubulin glutamylation in a subset of ciliated neurons including amphid, phasmid, CEP and RnA neurons. Its function is as follows. Specifically promotes tubulin glutamylation in male ciliated CEM, HOB and RnB neurons that release bioactive extracellular vesicles. Regulates the localization of TRP channel pdk-2 in male CEM, HOB and RnB neurons. Regulates the environmental release of bioactive extracellular vesicles in cilia. This chain is Tubulin polyglutamylase ttll-11, found in Caenorhabditis elegans.